We begin with the raw amino-acid sequence, 317 residues long: Putative peptide import ATP-binding protein BruAb2_0797 (317 aa).

The ABC transporter domain occupies 7–250 (LSVRGLAKHY…PQHPYTRALL (244 aa)). 43-50 (GESGSGKT) lines the ATP pocket.

It belongs to the ABC transporter superfamily. In terms of assembly, the complex is composed of two ATP-binding proteins (BruAb2_0796 and BruAb2_0797), two transmembrane proteins (BruAb2_0794) and a solute-binding protein (BruAb2_0792).

Its subcellular location is the cell inner membrane. Its function is as follows. Probably part of an ABC transporter complex that could be involved in peptide import. Probably responsible for energy coupling to the transport system. This chain is Putative peptide import ATP-binding protein BruAb2_0797, found in Brucella abortus biovar 1 (strain 9-941).